Reading from the N-terminus, the 85-residue chain is Cell division topological specificity factor (85 aa).

Belongs to the MinE family.

In terms of biological role, prevents the cell division inhibition by proteins MinC and MinD at internal division sites while permitting inhibition at polar sites. This ensures cell division at the proper site by restricting the formation of a division septum at the midpoint of the long axis of the cell. The sequence is that of Cell division topological specificity factor from Shewanella baltica (strain OS223).